The sequence spans 450 residues: Gluconate permease (450 aa).

A run of 12 helical transmembrane segments spans residues 6–26 (HDAYLLLDALVTIIGLIVLIT), 30–50 (VHPFIALIIAAGFLGLTSGMP), 60–80 (DGFGGVLGFVGVILALGTMLG), 116–136 (VGIPLFFEIGFILLIPLVFIV), 142–162 (VSLIKIGIPLLAGLSAVHGLV), 183–203 (ILYGLIVALPTAAIAGPLFGA), 233–253 (FGVTLATVLLPVFLMLLKTFA), 269–289 (MIGHPISALLLALLVALYTFG), 312–332 (AIVMIIGAGGGFKQMLVASGV), 338–358 (HLAVNAQISPILLAWLVAAVI), 366–386 (TVATITGAGIVVPVIDLIPGV), and 430–450 (AMETILSVVGLVFILLLSLVL).

Belongs to the GntP permease family.

The protein resides in the cell inner membrane. It functions in the pathway carbohydrate acid metabolism; D-gluconate degradation. This Pseudomonas aeruginosa (strain ATCC 15692 / DSM 22644 / CIP 104116 / JCM 14847 / LMG 12228 / 1C / PRS 101 / PAO1) protein is Gluconate permease (gnuT).